Here is a 622-residue protein sequence, read N- to C-terminus: Solute carrier family 2, facilitated glucose transporter member 12 (622 aa).

Residues 1–26 (MVPVENTEGPNLLNQKGREAETEGSC) are disordered. Over 1 to 44 (MVPVENTEGPNLLNQKGREAETEGSCGASGGGHPACAGGPSMFT) the chain is Cytoplasmic. The chain crosses the membrane as a helical span at residues 45-65 (FLTSVTAAISGLLVGYELGLI). Over 66–84 (SGALLQIRTLLALTCHEQE) the chain is Extracellular. Residues 85 to 105 (MVVSSLLIGAFLASLTGGVLI) traverse the membrane as a helical segment. The Cytoplasmic segment spans residues 106–111 (DRYGRR). The helical transmembrane segment at 112–132 (LAIILSSCLLGLGSLVLIMSL) threads the bilayer. At 133 to 141 (SYTLLIMGR) the chain is on the extracellular side. The chain crosses the membrane as a helical span at residues 142-162 (VAIGVSISLSSIATCVYIAEI). Over 163–168 (APQHRR) the chain is Cytoplasmic. A helical transmembrane segment spans residues 169-189 (GLLVSLNELMIVTGILFAYIS). At 190 to 201 (NYAFANISNGWK) the chain is on the extracellular side. Asn-195 carries N-linked (GlcNAc...) asparagine glycosylation. A helical membrane pass occupies residues 202 to 222 (YMFGLVIPLGVLQAIAMYFLP). Residues 223–282 (PSPRFLVMKGQEESAGKVLRKLRVISDTTEELTLIKSSLKDEYQYSFWDLFRSKDNMRTR) lie on the Cytoplasmic side of the membrane. Residues 283–303 (ILIGLTLVFFVQTTGQPNILF) traverse the membrane as a helical segment. At 304–321 (YASTVLKSVGFQSNEAAS) the chain is on the extracellular side. Residues 322-342 (LASTGVGVVKVVSTIPATLLV) traverse the membrane as a helical segment. Topologically, residues 343-349 (DHIGSKT) are cytoplasmic. The chain crosses the membrane as a helical span at residues 350 to 370 (FLCIGSSVMSASLLTMGIVNL). At 371-471 (NINMNFTNIC…PAAYKWLSLA (101 aa)) the chain is on the extracellular side. Residues Asn-375, Asn-387, Asn-400, and Asn-405 are each glycosylated (N-linked (GlcNAc...) asparagine). Residues 472-492 (SLLVYVAAFSIGLGPMPWLVL) form a helical membrane-spanning segment. At 493–503 (SEIFPGGIRGR) the chain is on the cytoplasmic side. A helical membrane pass occupies residues 504–524 (AMALTSSMNWGVNLLISLTFL). The Extracellular segment spans residues 525–533 (TVTDLIGLS). The chain crosses the membrane as a helical span at residues 534–554 (WVCFIYTIMSLASLAFVVLFI). Residues 555–622 (PETKGCSLEQ…GQSQRPSPDT (68 aa)) lie on the Cytoplasmic side of the membrane.

It belongs to the major facilitator superfamily. Sugar transporter (TC 2.A.1.1) family. Glucose transporter subfamily. Expressed in skeletal muscle, heart, brain, kidney, spleen, adipose tissues and to a lesser extent in small intestine and lung.

The protein localises to the cell membrane. It localises to the endomembrane system. Its subcellular location is the cytoplasm. The protein resides in the perinuclear region. It catalyses the reaction D-glucose(out) = D-glucose(in). In terms of biological role, insulin-independent facilitative glucose transporter. The protein is Solute carrier family 2, facilitated glucose transporter member 12 of Mus musculus (Mouse).